Here is a 474-residue protein sequence, read N- to C-terminus: tRNA-2-methylthio-N(6)-dimethylallyladenosine synthase (474 aa).

One can recognise an MTTase N-terminal domain in the interval 3–120 (KKLHIKTWGC…LPEMIEQIQQ (118 aa)). The [4Fe-4S] cluster site is built by C12, C49, C83, C157, C161, and C164. In terms of domain architecture, Radical SAM core spans 143–375 (RAEGPSAFVS…QDRITQQAMR (233 aa)). The region spanning 378–441 (RQMLGTVQRI…TNSLRGKFIR (64 aa)) is the TRAM domain.

The protein belongs to the methylthiotransferase family. MiaB subfamily. Monomer. It depends on [4Fe-4S] cluster as a cofactor.

The protein resides in the cytoplasm. It catalyses the reaction N(6)-dimethylallyladenosine(37) in tRNA + (sulfur carrier)-SH + AH2 + 2 S-adenosyl-L-methionine = 2-methylsulfanyl-N(6)-dimethylallyladenosine(37) in tRNA + (sulfur carrier)-H + 5'-deoxyadenosine + L-methionine + A + S-adenosyl-L-homocysteine + 2 H(+). In terms of biological role, catalyzes the methylthiolation of N6-(dimethylallyl)adenosine (i(6)A), leading to the formation of 2-methylthio-N6-(dimethylallyl)adenosine (ms(2)i(6)A) at position 37 in tRNAs that read codons beginning with uridine. This chain is tRNA-2-methylthio-N(6)-dimethylallyladenosine synthase, found in Shewanella loihica (strain ATCC BAA-1088 / PV-4).